The following is a 419-amino-acid chain: UDP-N-acetylglucosamine 1-carboxyvinyltransferase (419 aa).

Lysine 22–asparagine 23 provides a ligand contact to phosphoenolpyruvate. Arginine 93 lines the UDP-N-acetyl-alpha-D-glucosamine pocket. Cysteine 117 acts as the Proton donor in catalysis. At cysteine 117 the chain carries 2-(S-cysteinyl)pyruvic acid O-phosphothioketal. Positions 306 and 328 each coordinate UDP-N-acetyl-alpha-D-glucosamine.

Belongs to the EPSP synthase family. MurA subfamily.

It localises to the cytoplasm. The enzyme catalyses phosphoenolpyruvate + UDP-N-acetyl-alpha-D-glucosamine = UDP-N-acetyl-3-O-(1-carboxyvinyl)-alpha-D-glucosamine + phosphate. Its pathway is cell wall biogenesis; peptidoglycan biosynthesis. Functionally, cell wall formation. Adds enolpyruvyl to UDP-N-acetylglucosamine. In Magnetococcus marinus (strain ATCC BAA-1437 / JCM 17883 / MC-1), this protein is UDP-N-acetylglucosamine 1-carboxyvinyltransferase.